The primary structure comprises 626 residues: Procollagen galactosyltransferase 2 (626 aa).

The first 27 residues, 1 to 27 (MAARPAATLAWSLLLLSSALLREGCRA), serve as a signal peptide directing secretion. Residues N97, N185, N382, and N580 are each glycosylated (N-linked (GlcNAc...) asparagine). The interval 604 to 626 (NAKNTEALPPPTSLDTVPSRDEL) is disordered. The Prevents secretion from ER signature appears at 623 to 626 (RDEL).

This sequence belongs to the glycosyltransferase 25 family. As to expression, expressed in brain and skeletal muscle.

The protein resides in the endoplasmic reticulum lumen. The enzyme catalyses (5R)-5-hydroxy-L-lysyl-[collagen] + UDP-alpha-D-galactose = (5R)-5-O-(beta-D-galactosyl)-5-hydroxy-L-lysyl-[collagen] + UDP + H(+). Beta-galactosyltransferase that transfers beta-galactose to hydroxylysine residues of collagen. This chain is Procollagen galactosyltransferase 2 (COLGALT2), found in Homo sapiens (Human).